A 314-amino-acid chain; its full sequence is DNA-directed RNA polymerase subunit alpha (314 aa).

Positions 1–228 (MIEIEKPVIE…EHLNIFVGLT (228 aa)) are alpha N-terminal domain (alpha-NTD). Positions 245-314 (KEKVLEMTIE…ELGLGLRKEE (70 aa)) are alpha C-terminal domain (alpha-CTD).

The protein belongs to the RNA polymerase alpha chain family. Homodimer. The RNAP catalytic core consists of 2 alpha, 1 beta, 1 beta' and 1 omega subunit. When a sigma factor is associated with the core the holoenzyme is formed, which can initiate transcription.

The catalysed reaction is RNA(n) + a ribonucleoside 5'-triphosphate = RNA(n+1) + diphosphate. DNA-dependent RNA polymerase catalyzes the transcription of DNA into RNA using the four ribonucleoside triphosphates as substrates. The sequence is that of DNA-directed RNA polymerase subunit alpha from Halalkalibacterium halodurans (strain ATCC BAA-125 / DSM 18197 / FERM 7344 / JCM 9153 / C-125) (Bacillus halodurans).